Consider the following 336-residue polypeptide: Casein kinase I isoform beta (336 aa).

Residues 17-285 enclose the Protein kinase domain; the sequence is YKLVREIGFG…YLRQLFRLLF (269 aa). Residues 23–31 and K46 each bind ATP; that span reads IGFGSFGHV. D136 acts as the Proton acceptor in catalysis. Low complexity predominate over residues 309 to 320; it reads ASSSSGEGQQAQ. The tract at residues 309 to 336 is disordered; the sequence is ASSSSGEGQQAQTPTGKSDNTKSEMKHS. The segment covering 327–336 has biased composition (basic and acidic residues); it reads DNTKSEMKHS.

The protein belongs to the protein kinase superfamily. CK1 Ser/Thr protein kinase family. Casein kinase I subfamily. Monomer.

It localises to the cytoplasm. The catalysed reaction is L-seryl-[protein] + ATP = O-phospho-L-seryl-[protein] + ADP + H(+). It catalyses the reaction L-threonyl-[protein] + ATP = O-phospho-L-threonyl-[protein] + ADP + H(+). Its function is as follows. Casein kinases are operationally defined by their preferential utilization of acidic proteins such as caseins as substrates. It can phosphorylate a large number of proteins. Participates in Wnt signaling. In Bos taurus (Bovine), this protein is Casein kinase I isoform beta (CSNK1B).